The chain runs to 993 residues: UPF0182 protein Sare_4110 (993 aa).

7 consecutive transmembrane segments (helical) span residues 18–38 (IGVL…VQAW), 61–81 (LLLF…NLWL), 110–130 (LGTW…LSAQ), 171–191 (GVAF…HYVF), 209–229 (AHLS…YVLD), 260–280 (ILAY…NAWM), and 283–303 (LVWP…IGGI). Disordered stretches follow at residues 892–937 (QGEK…ADAA) and 974–993 (EQAA…SPGG). A compositionally biased stretch (pro residues) spans 900–929 (STPPPSGETPAPTPTPTPTPSSPSVTPPPV). Residues 976–993 (AAGPGSAATPTGSPSPGG) are compositionally biased toward low complexity.

It belongs to the UPF0182 family.

It is found in the cell membrane. This is UPF0182 protein Sare_4110 from Salinispora arenicola (strain CNS-205).